A 303-amino-acid polypeptide reads, in one-letter code: Sodium/potassium-transporting ATPase subunit beta-1 (303 aa).

Residues 1–34 (MPAATKDSDGGWKKFLWNSEKKEFLGRTGGSWAK) are Cytoplasmic-facing. Residues 35 to 55 (ILLFYVIFYGCLAGIFIGTIQ) form a helical; Signal-anchor for type II membrane protein membrane-spanning segment. Residues 56 to 303 (ALLLTINDFK…FDVKFTINES (248 aa)) lie on the Extracellular side of the membrane. Residue Asn-113 is glycosylated (N-linked (GlcNAc...) asparagine). Disulfide bonds link Cys-126–Cys-149 and Cys-159–Cys-175. N-linked (GlcNAc...) asparagine glycosylation is found at Asn-194 and Asn-264. A disulfide bridge links Cys-214 with Cys-275.

It belongs to the X(+)/potassium ATPases subunit beta family. As to quaternary structure, the sodium/potassium-transporting ATPase is composed of a catalytic alpha subunit, an auxiliary non-catalytic beta subunit and an additional regulatory subunit. In terms of tissue distribution, detected in all tissues except liver and cardiac muscle. Highest levels found in intestine, ovary and kidney with marginally lower levels in brain, spleen, esophagus, eye and pancreas, intermediate levels in gill and low levels in white and red skeletal muscle.

It is found in the cell membrane. This is the non-catalytic component of the active enzyme, which catalyzes the hydrolysis of ATP coupled with the exchange of Na(+) and K(+) ions across the plasma membrane. The beta subunit regulates, through assembly of alpha/beta heterodimers, the number of sodium pumps transported to the plasma membrane. This chain is Sodium/potassium-transporting ATPase subunit beta-1 (atp1b1), found in Anguilla anguilla (European freshwater eel).